The sequence spans 558 residues: CTP synthase (558 aa).

The amidoligase domain stretch occupies residues 1-266 (MSAKYIFVTG…DRLVMKYLRL (266 aa)). Serine 14 contacts CTP. Residue serine 14 participates in UTP binding. ATP contacts are provided by residues 15 to 20 (SLGKGL) and aspartate 72. Residues aspartate 72 and glutamate 140 each coordinate Mg(2+). CTP-binding positions include 147–149 (DIE), 187–192 (KTKPTQ), and lysine 223. Residues 187–192 (KTKPTQ) and lysine 223 each bind UTP. ATP is bound at residue 239–241 (KDV). One can recognise a Glutamine amidotransferase type-1 domain in the interval 291–537 (IIGIIGKYVE…IGASYEHRMK (247 aa)). Glycine 355 is a binding site for L-glutamine. The active-site Nucleophile; for glutamine hydrolysis is cysteine 382. Residues 383-386 (LGMQ), glutamate 406, and arginine 463 each bind L-glutamine. Catalysis depends on residues histidine 510 and glutamate 512. The tract at residues 539–558 (THTKEREEESVFLRPERVGK) is disordered. The segment covering 542 to 558 (KEREEESVFLRPERVGK) has biased composition (basic and acidic residues).

The protein belongs to the CTP synthase family. As to quaternary structure, homotetramer.

It catalyses the reaction UTP + L-glutamine + ATP + H2O = CTP + L-glutamate + ADP + phosphate + 2 H(+). The enzyme catalyses L-glutamine + H2O = L-glutamate + NH4(+). The catalysed reaction is UTP + NH4(+) + ATP = CTP + ADP + phosphate + 2 H(+). Its pathway is pyrimidine metabolism; CTP biosynthesis via de novo pathway; CTP from UDP: step 2/2. Its activity is regulated as follows. Allosterically activated by GTP, when glutamine is the substrate; GTP has no effect on the reaction when ammonia is the substrate. The allosteric effector GTP functions by stabilizing the protein conformation that binds the tetrahedral intermediate(s) formed during glutamine hydrolysis. Inhibited by the product CTP, via allosteric rather than competitive inhibition. Catalyzes the ATP-dependent amination of UTP to CTP with either L-glutamine or ammonia as the source of nitrogen. Regulates intracellular CTP levels through interactions with the four ribonucleotide triphosphates. The polypeptide is CTP synthase (Koribacter versatilis (strain Ellin345)).